A 249-amino-acid chain; its full sequence is Adenosylcobinamide-GDP ribazoletransferase (249 aa).

6 consecutive transmembrane segments (helical) span residues Leu36–Gly56, Leu57–His77, Val106–Phe126, Lys133–Thr153, Leu188–Leu208, and Gly226–Ile246.

The protein belongs to the CobS family. Mg(2+) serves as cofactor.

The protein resides in the cell membrane. The catalysed reaction is alpha-ribazole + adenosylcob(III)inamide-GDP = adenosylcob(III)alamin + GMP + H(+). It catalyses the reaction alpha-ribazole 5'-phosphate + adenosylcob(III)inamide-GDP = adenosylcob(III)alamin 5'-phosphate + GMP + H(+). It functions in the pathway cofactor biosynthesis; adenosylcobalamin biosynthesis; adenosylcobalamin from cob(II)yrinate a,c-diamide: step 7/7. Functionally, joins adenosylcobinamide-GDP and alpha-ribazole to generate adenosylcobalamin (Ado-cobalamin). Also synthesizes adenosylcobalamin 5'-phosphate from adenosylcobinamide-GDP and alpha-ribazole 5'-phosphate. This Desulforamulus reducens (strain ATCC BAA-1160 / DSM 100696 / MI-1) (Desulfotomaculum reducens) protein is Adenosylcobinamide-GDP ribazoletransferase.